The primary structure comprises 635 residues: Glutamine sensor PIB2 (635 aa).

Residues 1–110 are disordered; that stretch reads MTALHSVSKT…GTGFVDRKQQ (110 aa). Positions 1–164 are may play a role in attenuating TORC1 signaling; sequence MTALHSVSKT…KTLPFTDDQR (164 aa). Residues 33-44 show a composition bias toward basic and acidic residues; the sequence is RNHDYRGRKGDE. A phosphoserine mark is found at serine 46 and serine 53. A Phosphothreonine modification is found at threonine 56. A compositionally biased stretch (polar residues) spans 67–85; it reads STHSEQSILSSISLKSMVN. A phosphoserine mark is found at serine 73, serine 113, serine 124, serine 148, serine 165, and serine 174. Disordered stretches follow at residues 123-181 and 224-254; these read NSAE…VSRG and SSNL…TSKV. Low complexity predominate over residues 238–254; the sequence is SSSSSTSSVSSSSTSKV. Phosphoserine occurs at positions 300, 309, and 381. Residues 304–440 form a required for interaction with TORC1 region; sequence LPQPASSTNL…PTISNRNSAR (137 aa). The FYVE-type; atypical zinc finger occupies 452–527; it reads DSKRNSCRYC…ICDDCLVEYE (76 aa). Positions 458, 461, 474, 477, 482, 485, 519, and 522 each coordinate Zn(2+). Disordered regions lie at residues 534-557 and 570-623; these read HNAN…DNRK and ALFR…GSVI. Acidic residues-rich tracts occupy residues 543–553 and 601–616; these read INVEEGEDDDN and EEAD…EEGN. Positions 620-635 are may be required for TORC1 activation; sequence GSVIGSVPANWNWSSF.

In terms of assembly, interacts with the TORC1 complex when activated by glutamine or cysteine. Interacts with TOR1; glutamine enhances the interaction. Interacts with KOG1; glutamine enhances the interaction. Interacts with TCO89. Interacts with LST8; glutamine enhances the interaction. Interacts with TOR2; glutamine enhances the interaction.

It localises to the vacuole membrane. Its activity is regulated as follows. Activated by glutamine. May also be activated by cysteine. Functionally, functions as an intracellular glutamine sensor that directly activates the TORC1 signaling pathway, to promote cell growth when glutamine is available. May play a role in repressing NPR1 activity independently of TORC1 signaling. This is Glutamine sensor PIB2 from Saccharomyces cerevisiae (strain ATCC 204508 / S288c) (Baker's yeast).